The sequence spans 206 residues: Glycerol-3-phosphate acyltransferase (206 aa).

6 consecutive transmembrane segments (helical) span residues 4–24, 53–73, 86–106, 116–136, 137–157, and 160–180; these read TAFA…AVIV, LAAA…VALA, GIAL…FFGF, VGIL…TWLF, MAFV…LAPV, and FFIL…AIVV.

The protein belongs to the PlsY family. In terms of assembly, probably interacts with PlsX.

Its subcellular location is the cell inner membrane. The enzyme catalyses an acyl phosphate + sn-glycerol 3-phosphate = a 1-acyl-sn-glycero-3-phosphate + phosphate. It participates in lipid metabolism; phospholipid metabolism. Catalyzes the transfer of an acyl group from acyl-phosphate (acyl-PO(4)) to glycerol-3-phosphate (G3P) to form lysophosphatidic acid (LPA). This enzyme utilizes acyl-phosphate as fatty acyl donor, but not acyl-CoA or acyl-ACP. The chain is Glycerol-3-phosphate acyltransferase from Chromobacterium violaceum (strain ATCC 12472 / DSM 30191 / JCM 1249 / CCUG 213 / NBRC 12614 / NCIMB 9131 / NCTC 9757 / MK).